The following is a 359-amino-acid chain: Pyruvate dehydrogenase E1 component subunit beta, mitochondrial (359 aa).

Residues 1 to 30 (MAVVAVLVRKPLEQVSGLLRRRFHRTAPAA) constitute a mitochondrion transit peptide. Phosphotyrosine is present on tyrosine 67. Glutamate 89 serves as a coordination point for thiamine diphosphate. Isoleucine 142, alanine 190, isoleucine 191, aspartate 193, and asparagine 195 together coordinate K(+). Lysine 354 is modified (N6-acetyllysine).

In terms of assembly, heterotetramer of two PDHA1 and two PDHB subunits. The heterotetramer interacts with DLAT, and is part of the multimeric pyruvate dehydrogenase complex that contains multiple copies of pyruvate dehydrogenase (E1), dihydrolipoamide acetyltransferase (DLAT, E2) and lipoamide dehydrogenase (DLD, E3). These subunits are bound to an inner core composed of about 48 DLAT and 12 PDHX molecules. Interacts with DLAT. The cofactor is thiamine diphosphate.

Its subcellular location is the mitochondrion matrix. It carries out the reaction N(6)-[(R)-lipoyl]-L-lysyl-[protein] + pyruvate + H(+) = N(6)-[(R)-S(8)-acetyldihydrolipoyl]-L-lysyl-[protein] + CO2. The pyruvate dehydrogenase complex catalyzes the overall conversion of pyruvate to acetyl-CoA and CO(2), and thereby links the glycolytic pathway to the tricarboxylic cycle. In Bos taurus (Bovine), this protein is Pyruvate dehydrogenase E1 component subunit beta, mitochondrial (PDHB).